The chain runs to 401 residues: Enolase (401 aa).

Residue Gln-154 participates in (2R)-2-phosphoglycerate binding. Glu-196 (proton donor) is an active-site residue. The Mg(2+) site is built by Asp-232, Glu-275, and Asp-302. (2R)-2-phosphoglycerate is bound by residues Lys-327, Arg-356, Ser-357, and Lys-378. Catalysis depends on Lys-327, which acts as the Proton acceptor.

This sequence belongs to the enolase family. Requires Mg(2+) as cofactor.

Its subcellular location is the cytoplasm. It localises to the secreted. It is found in the cell surface. The catalysed reaction is (2R)-2-phosphoglycerate = phosphoenolpyruvate + H2O. It functions in the pathway carbohydrate degradation; glycolysis; pyruvate from D-glyceraldehyde 3-phosphate: step 4/5. Its function is as follows. Catalyzes the reversible conversion of 2-phosphoglycerate (2-PG) into phosphoenolpyruvate (PEP). It is essential for the degradation of carbohydrates via glycolysis. In Haloarcula marismortui (strain ATCC 43049 / DSM 3752 / JCM 8966 / VKM B-1809) (Halobacterium marismortui), this protein is Enolase.